Here is a 414-residue protein sequence, read N- to C-terminus: Probable isoprenylcysteine alpha-carbonyl methylesterase ICME (414 aa).

The disordered stretch occupies residues 1–54 (MQPASPVSGDAGPVAEAVPPRGAPQVLVRRRSVPFSPDSPLAPGSRGGGERRST). 2 helical membrane passes run 90–110 (LAAL…VGYY) and 145–165 (VVAF…GALL). Residues 151–153 (GGA) and 222–224 (QSA) contribute to the substrate site. Active-site residues include S223, D323, and H355.

The protein belongs to the AB hydrolase superfamily. Isoprenylcysteine methylesterase family.

It localises to the endoplasmic reticulum membrane. The protein resides in the golgi apparatus membrane. The enzyme catalyses [protein]-C-terminal S-[(2E,6E)-farnesyl]-L-cysteine methyl ester + H2O = [protein]-C-terminal S-[(2E,6E)-farnesyl]-L-cysteine + methanol + H(+). Functionally, catalyzes the demethylation of isoprenylcysteine methylesters. The chain is Probable isoprenylcysteine alpha-carbonyl methylesterase ICME (IMCE) from Oryza sativa subsp. japonica (Rice).